The chain runs to 277 residues: Coiled-coil domain-containing protein 117 (277 aa).

Residues 1 to 69 (MAALGRPFSG…GRVSIHCRKK (69 aa)) are disordered. The span at 26–37 (FAGRAFPPGAAG) shows a compositional bias: low complexity. The residue at position 47 (arginine 47) is an Omega-N-methylarginine. At serine 52 the chain carries Phosphoserine. Positions 58-69 (ARGRVSIHCRKK) are enriched in basic residues. The stretch at 139 to 166 (QCEVARRRLQEIEDRIIDEDEEVESDRN) forms a coiled coil. Residues 212 to 277 (LPELLPEKPK…ATSTEEEMEL (66 aa)) are disordered.

Interacts with CIAO2B; the interaction is direct. Interacts with MMS19; the interaction is indirect.

Its subcellular location is the cytoplasm. It is found in the cytoskeleton. The protein localises to the spindle. It localises to the nucleus. Its function is as follows. Facilitates DNA repair, cell cycle progression, and cell proliferation through its interaction with CIAO2B. This chain is Coiled-coil domain-containing protein 117, found in Mus musculus (Mouse).